A 353-amino-acid polypeptide reads, in one-letter code: Histidinol-phosphate aminotransferase (353 aa).

Lysine 211 is subject to N6-(pyridoxal phosphate)lysine.

The protein belongs to the class-II pyridoxal-phosphate-dependent aminotransferase family. Histidinol-phosphate aminotransferase subfamily. Homodimer. The cofactor is pyridoxal 5'-phosphate.

It catalyses the reaction L-histidinol phosphate + 2-oxoglutarate = 3-(imidazol-4-yl)-2-oxopropyl phosphate + L-glutamate. Its pathway is amino-acid biosynthesis; L-histidine biosynthesis; L-histidine from 5-phospho-alpha-D-ribose 1-diphosphate: step 7/9. This Klebsiella pneumoniae (strain 342) protein is Histidinol-phosphate aminotransferase.